The following is a 632-amino-acid chain: 2-hydroxyacyl-CoA lyase 2 (632 aa).

A helical transmembrane segment spans residues 10–30; it reads AWGFFSSFLLLAFGTLVAALL. Glu-98 serves as a coordination point for thiamine diphosphate. Residues 470-550 are thiamine pyrophosphate binding; the sequence is DFVGTAAYLV…VMALIGNDAG (81 aa). The Mg(2+) site is built by Asp-521 and Asn-547.

It belongs to the TPP enzyme family. Mg(2+) is required as a cofactor. Requires thiamine diphosphate as cofactor.

It localises to the endoplasmic reticulum membrane. It catalyses the reaction 2-hydroxyoctadecanoyl-CoA = heptadecanal + formyl-CoA. It carries out the reaction (2R)-hydroxyhexadecanoyl-CoA = pentadecanal + formyl-CoA. Its function is as follows. Endoplasmic reticulum 2-OH acyl-CoA lyase involved in the cleavage (C1 removal) reaction in the fatty acid alpha-oxydation in a thiamine pyrophosphate (TPP)-dependent manner. Involved in the phytosphingosine degradation pathway. This is 2-hydroxyacyl-CoA lyase 2 (ILVBL) from Bos taurus (Bovine).